A 62-amino-acid polypeptide reads, in one-letter code: Conotoxin Pn-B02 (62 aa).

A signal peptide spans 1-19 (MRCLPVFIILLLLIASAPS). A propeptide spanning residues 20-49 (FDALPKTEDNVPLSSFHDNLKRTRRIHLNI) is cleaved from the precursor. Alanine 61 bears the Alanine amide mark.

This sequence belongs to the conotoxin T superfamily. Contains 2 disulfide bonds that can be either 'C1-C3, C2-C4' or 'C1-C4, C2-C3', since these disulfide connectivities have been observed for conotoxins with cysteine framework V (for examples, see AC P0DQQ7 and AC P81755). Expressed by the venom duct.

It is found in the secreted. The protein is Conotoxin Pn-B02 of Conus pennaceus (Feathered cone).